The chain runs to 122 residues: MIQQESRLKVADNTGAKEILCIRVLGGSSRRYAGIGDVIVATVKEAIPGANVKRGDVVKAVVVRTVKERRRADGSYIKFDENAAVIIKNDNDPRGTRIFGPVGRELREKRFMKIVSLAPEVL.

Belongs to the universal ribosomal protein uL14 family. In terms of assembly, part of the 50S ribosomal subunit. Forms a cluster with proteins L3 and L19. In the 70S ribosome, L14 and L19 interact and together make contacts with the 16S rRNA in bridges B5 and B8.

Functionally, binds to 23S rRNA. Forms part of two intersubunit bridges in the 70S ribosome. The polypeptide is Large ribosomal subunit protein uL14 (Mycobacterium sp. (strain KMS)).